The chain runs to 677 residues: Fermitin family homolog 1 (677 aa).

The FERM domain occupies 96 to 653 (MLRLRLPNAK…HEYIGGYIFL (558 aa)). The disordered stretch occupies residues 157-181 (KEPVIEDILNLESSSTSSGSPVSPG). A compositionally biased stretch (low complexity) spans 169 to 181 (SSSTSSGSPVSPG). A phosphoserine mark is found at Ser170 and Ser179. The region spanning 377 to 473 (KLFRPKKLML…WMAACILASK (97 aa)) is the PH domain.

The protein belongs to the kindlin family. As to quaternary structure, interacts with the cytoplasmic domain of integrins ITGB1 and ITGB3.

The protein localises to the cytoplasm. The protein resides in the cytoskeleton. Its subcellular location is the cell junction. It localises to the focal adhesion. It is found in the cell projection. The protein localises to the ruffle membrane. Functionally, involved in cell adhesion. Contributes to integrin activation. When coexpressed with talin, potentiates activation of ITGA2B. Required for normal keratinocyte proliferation. Required for normal polarization of basal keratinocytes in skin, and for normal cell shape. Required for normal adhesion of keratinocytes to fibronectin and laminin, and for normal keratinocyte migration to wound sites. In Mus musculus (Mouse), this protein is Fermitin family homolog 1 (Fermt1).